Here is a 363-residue protein sequence, read N- to C-terminus: Peptide chain release factor 2 (363 aa).

Gln-251 is modified (N5-methylglutamine).

It belongs to the prokaryotic/mitochondrial release factor family. Methylated by PrmC. Methylation increases the termination efficiency of RF2.

The protein resides in the cytoplasm. Peptide chain release factor 2 directs the termination of translation in response to the peptide chain termination codons UGA and UAA. The protein is Peptide chain release factor 2 of Helicobacter pylori (strain P12).